The sequence spans 303 residues: Ribosomal RNA small subunit methyltransferase A (303 aa).

Positions 1–19 are enriched in low complexity; sequence MSSRPPASFSATFSAARSS. The segment at 1-34 is disordered; sequence MSSRPPASFSATFSAARSSKCVPPPRRPSTDVSL. His-55, Leu-57, Gly-82, Glu-104, Asp-130, and Asn-149 together coordinate S-adenosyl-L-methionine.

This sequence belongs to the class I-like SAM-binding methyltransferase superfamily. rRNA adenine N(6)-methyltransferase family. RsmA subfamily.

It localises to the cytoplasm. It carries out the reaction adenosine(1518)/adenosine(1519) in 16S rRNA + 4 S-adenosyl-L-methionine = N(6)-dimethyladenosine(1518)/N(6)-dimethyladenosine(1519) in 16S rRNA + 4 S-adenosyl-L-homocysteine + 4 H(+). Functionally, specifically dimethylates two adjacent adenosines (A1518 and A1519) in the loop of a conserved hairpin near the 3'-end of 16S rRNA in the 30S particle. May play a critical role in biogenesis of 30S subunits. The sequence is that of Ribosomal RNA small subunit methyltransferase A from Gluconobacter oxydans (strain 621H) (Gluconobacter suboxydans).